We begin with the raw amino-acid sequence, 105 residues long: Circadian clock oscillator protein KaiB (105 aa).

The protein belongs to the KaiB family. In terms of assembly, may undergo a major conformational rearrangment; in the free state forms homooligomers. When bound to KaiC switches to a monomeric thioredoxin-fold (KaiB(fs)). The active oscillator complex is probably KaiC(6):KaiB(6).

Component of the KaiBC clock protein complex, which constitutes the main circadian regulator in cyanobacteria; it may modify the ATPase activity of KaiC. In terms of biological role, may be a metamorphic protein which reversibly switches between an inactive tetrameric fold and a rare, thioredoxin-like monomeric fold (KaiB(fs)). KaiB(fs) binds phospho-KaiC, and perhaps clock output effectors. In Prochlorococcus marinus (strain MIT 9312), this protein is Circadian clock oscillator protein KaiB.